The following is a 114-amino-acid chain: Histone H3-5 (114 aa).

The tract at residues 1–29 is disordered; sequence NTGAKAPRKQLANKAARKSTNVNAVSGVK.

This sequence belongs to the histone H3 family. The nucleosome is a histone octamer containing two molecules each of H2A, H2B, H3 and H4 assembled in one H3-H4 heterotetramer and two H2A-H2B heterodimers. The octamer wraps approximately 147 bp of DNA.

It localises to the nucleus. Its subcellular location is the chromosome. Functionally, core component of nucleosome. Nucleosomes wrap and compact DNA into chromatin, limiting DNA accessibility to the cellular machineries which require DNA as a template. Histones thereby play a central role in transcription regulation, DNA repair, DNA replication and chromosomal stability. DNA accessibility is regulated via a complex set of post-translational modifications of histones, also called histone code, and nucleosome remodeling. The polypeptide is Histone H3-5 (H3-5) (Stylonychia lemnae (Ciliate)).